Consider the following 356-residue polypeptide: 3-dehydroquinate synthase (356 aa).

Residues E71–K76, G105–D109, T129–S130, K142, and K151 each bind NAD(+). Zn(2+) contacts are provided by E184, H247, and H264.

It belongs to the sugar phosphate cyclases superfamily. Dehydroquinate synthase family. Co(2+) is required as a cofactor. The cofactor is Zn(2+). It depends on NAD(+) as a cofactor.

It is found in the cytoplasm. It catalyses the reaction 7-phospho-2-dehydro-3-deoxy-D-arabino-heptonate = 3-dehydroquinate + phosphate. It participates in metabolic intermediate biosynthesis; chorismate biosynthesis; chorismate from D-erythrose 4-phosphate and phosphoenolpyruvate: step 2/7. Its function is as follows. Catalyzes the conversion of 3-deoxy-D-arabino-heptulosonate 7-phosphate (DAHP) to dehydroquinate (DHQ). The chain is 3-dehydroquinate synthase from Lactococcus lactis subsp. cremoris (strain SK11).